A 398-amino-acid chain; its full sequence is Aspartate aminotransferase (398 aa).

G36, W132, and N185 together coordinate L-aspartate. K248 carries the N6-(pyridoxal phosphate)lysine modification. R376 is a binding site for L-aspartate.

This sequence belongs to the class-I pyridoxal-phosphate-dependent aminotransferase family. In terms of assembly, homodimer. Pyridoxal 5'-phosphate serves as cofactor.

The protein resides in the cytoplasm. The enzyme catalyses L-aspartate + 2-oxoglutarate = oxaloacetate + L-glutamate. The chain is Aspartate aminotransferase (aspC) from Pseudomonas aeruginosa (strain ATCC 15692 / DSM 22644 / CIP 104116 / JCM 14847 / LMG 12228 / 1C / PRS 101 / PAO1).